A 205-amino-acid chain; its full sequence is Thymidylate kinase (205 aa).

10 to 17 serves as a coordination point for ATP; it reads GIDGAGKS.

The protein belongs to the thymidylate kinase family.

The enzyme catalyses dTMP + ATP = dTDP + ADP. In terms of biological role, phosphorylation of dTMP to form dTDP in both de novo and salvage pathways of dTTP synthesis. This is Thymidylate kinase from Ralstonia pickettii (strain 12J).